A 591-amino-acid chain; its full sequence is Formate--tetrahydrofolate ligase (591 aa).

74 to 81 (TPLGEGKS) is an ATP binding site.

Belongs to the formate--tetrahydrofolate ligase family.

The enzyme catalyses (6S)-5,6,7,8-tetrahydrofolate + formate + ATP = (6R)-10-formyltetrahydrofolate + ADP + phosphate. It functions in the pathway one-carbon metabolism; tetrahydrofolate interconversion. This Lawsonia intracellularis (strain PHE/MN1-00) protein is Formate--tetrahydrofolate ligase.